A 196-amino-acid polypeptide reads, in one-letter code: Crossover junction endodeoxyribonuclease RuvC (196 aa).

Active-site residues include Asp23, Glu83, and His156. The Mg(2+) site is built by Asp23, Glu83, and His156.

The protein belongs to the RuvC family. As to quaternary structure, homodimer which binds Holliday junction (HJ) DNA. The HJ becomes 2-fold symmetrical on binding to RuvC with unstacked arms; it has a different conformation from HJ DNA in complex with RuvA. In the full resolvosome a probable DNA-RuvA(4)-RuvB(12)-RuvC(2) complex forms which resolves the HJ. Requires Mg(2+) as cofactor.

The protein localises to the cytoplasm. It carries out the reaction Endonucleolytic cleavage at a junction such as a reciprocal single-stranded crossover between two homologous DNA duplexes (Holliday junction).. The RuvA-RuvB-RuvC complex processes Holliday junction (HJ) DNA during genetic recombination and DNA repair. Endonuclease that resolves HJ intermediates. Cleaves cruciform DNA by making single-stranded nicks across the HJ at symmetrical positions within the homologous arms, yielding a 5'-phosphate and a 3'-hydroxyl group; requires a central core of homology in the junction. The consensus cleavage sequence is 5'-(A/T)TT(C/G)-3'. Cleavage occurs on the 3'-side of the TT dinucleotide at the point of strand exchange. HJ branch migration catalyzed by RuvA-RuvB allows RuvC to scan DNA until it finds its consensus sequence, where it cleaves and resolves the cruciform DNA. The chain is Crossover junction endodeoxyribonuclease RuvC from Treponema pallidum (strain Nichols).